Here is a 434-residue protein sequence, read N- to C-terminus: MEKSVNVIGAGLAGSEAVWQLVNRGVKVDLYEMRPVKQTPAHHTDKFAELVCTNSLRANGLTNAVGVIKEEMRMLDSIIIEAADKASVPAGGALAVDRHEFSGYITDKVKNHPLVTVHTEEVTTIPEGPTIIATGPLTSPALADEIKQLTGEEYLYFYDAAAPIIEKDSIDMDKVYLKSRYDKGEAAYLNCPMSEEEFNAFYEALVTAETAALKEFEKEVFFEGCMPIEVMAKRGIKTMLFGPLKPVGLEDPKTGKRPYAVLQLRQDDAAGTLYNMVGFQTHLKWGEQKRVFGMIPGLENAEIVRYGVMHRNTFINSPTVLEPTYQLKTRNDLFFAGQMTGVEGYVESAASGLAAGINAANFIQEKELVVFPTETAIGSLAHYITSASKKSFQPMNVNFGLFPELETKIRAKQERNEKLAERALNAIKKVAEEL.

Position 9 to 14 (Gly9 to Gly14) interacts with FAD.

It belongs to the MnmG family. TrmFO subfamily. The cofactor is FAD.

It is found in the cytoplasm. The catalysed reaction is uridine(54) in tRNA + (6R)-5,10-methylene-5,6,7,8-tetrahydrofolate + NADH + H(+) = 5-methyluridine(54) in tRNA + (6S)-5,6,7,8-tetrahydrofolate + NAD(+). The enzyme catalyses uridine(54) in tRNA + (6R)-5,10-methylene-5,6,7,8-tetrahydrofolate + NADPH + H(+) = 5-methyluridine(54) in tRNA + (6S)-5,6,7,8-tetrahydrofolate + NADP(+). Catalyzes the folate-dependent formation of 5-methyl-uridine at position 54 (M-5-U54) in all tRNAs. In Listeria monocytogenes serovar 1/2a (strain ATCC BAA-679 / EGD-e), this protein is Methylenetetrahydrofolate--tRNA-(uracil-5-)-methyltransferase TrmFO.